The sequence spans 360 residues: Phospho-N-acetylmuramoyl-pentapeptide-transferase (360 aa).

A run of 10 helical transmembrane segments spans residues 25-45 (RGIL…PWLI), 74-94 (MGGA…ADLA), 97-117 (YVWV…VDDY), 132-152 (WKYF…YMTA), 168-188 (IEIP…VGSS), 199-219 (GLAI…CYLS), 236-256 (SGEL…FLWF), 263-283 (VFMG…IAVI), 288-308 (VVLF…MIQV), and 338-358 (VIVR…ATLK).

The protein belongs to the glycosyltransferase 4 family. MraY subfamily. Mg(2+) is required as a cofactor.

It is found in the cell inner membrane. The enzyme catalyses UDP-N-acetyl-alpha-D-muramoyl-L-alanyl-gamma-D-glutamyl-meso-2,6-diaminopimeloyl-D-alanyl-D-alanine + di-trans,octa-cis-undecaprenyl phosphate = di-trans,octa-cis-undecaprenyl diphospho-N-acetyl-alpha-D-muramoyl-L-alanyl-D-glutamyl-meso-2,6-diaminopimeloyl-D-alanyl-D-alanine + UMP. It functions in the pathway cell wall biogenesis; peptidoglycan biosynthesis. Its function is as follows. Catalyzes the initial step of the lipid cycle reactions in the biosynthesis of the cell wall peptidoglycan: transfers peptidoglycan precursor phospho-MurNAc-pentapeptide from UDP-MurNAc-pentapeptide onto the lipid carrier undecaprenyl phosphate, yielding undecaprenyl-pyrophosphoryl-MurNAc-pentapeptide, known as lipid I. The polypeptide is Phospho-N-acetylmuramoyl-pentapeptide-transferase (Stutzerimonas stutzeri (strain A1501) (Pseudomonas stutzeri)).